The primary structure comprises 792 residues: Alpha-1,6-mannosylglycoprotein 6-beta-N-acetylglucosaminyltransferase B (792 aa).

Over 1 to 24 the chain is Cytoplasmic; the sequence is MITVNPDGKIMVRRCLVTLRPFRL. A helical; Signal-anchor for type II membrane protein membrane pass occupies residues 25–45; that stretch reads FVLGIGFFTLCFLMTSLGGQF. The Lumenal segment spans residues 46–792; it reads SARRLGDSPF…GQVALCQGCL (747 aa). A glycan (N-linked (GlcNAc...) asparagine) is linked at Asn127. 9 disulfide bridges follow: Cys157-Cys195, Cys168-Cys208, Cys184-Cys353, Cys387-Cys644, Cys700-Cys775, Cys704-Cys777, Cys711-Cys764, Cys732-Cys753, and Cys788-Cys791.

Belongs to the glycosyltransferase 18 family. Mn(2+) serves as cofactor. As to expression, predominantly expressed in brain. Expressed in all areas of the adult and fetal brain. Also expressed at much lower levels in testis, spleen and thymus.

It is found in the golgi apparatus membrane. It carries out the reaction N(4)-{beta-D-GlcNAc-(1-&gt;2)-[beta-D-GlcNAc-(1-&gt;4)]-alpha-D-Man-(1-&gt;3)-[beta-D-GlcNAc-(1-&gt;2)-alpha-D-Man-(1-&gt;6)]-beta-D-Man-(1-&gt;4)-beta-D-GlcNAc-(1-&gt;4)-beta-D-GlcNAc}-L-asparaginyl-[protein] + UDP-N-acetyl-alpha-D-glucosamine = N(4)-{beta-D-GlcNAc-(1-&gt;2)-[beta-D-GlcNAc-(1-&gt;4)]-alpha-D-Man-(1-&gt;3)-[beta-D-GlcNAc-(1-&gt;2)-[beta-D-GlcNAc-(1-&gt;6)]-alpha-D-Man-(1-&gt;6)]-beta-D-Man-(1-&gt;4)-beta-D-GlcNAc-(1-&gt;4)-beta-D-GlcNAc}-L-asparaginyl-[protein] + UDP + H(+). It catalyses the reaction 3-O-[N-acetyl-beta-D-glucosaminyl-(1-&gt;2)-alpha-D-mannosyl]-L-seryl-[protein] + UDP-N-acetyl-alpha-D-glucosamine = O(3)-{N-acetyl-beta-D-glucosaminyl-(1-&gt;2)-[N-acetyl-beta-D-glucosaminyl-(1-&gt;6)]-alpha-D-mannosyl}-L-seryl-[protein] + UDP + H(+). The enzyme catalyses 3-O-[N-acetyl-beta-D-glucosaminyl-(1-&gt;2)-alpha-D-mannosyl]-L-threonyl-[protein] + UDP-N-acetyl-alpha-D-glucosamine = O(3)-{N-acetyl-beta-D-glucosaminyl-(1-&gt;2)-[N-acetyl-beta-D-glucosaminyl-(1-&gt;6)]-alpha-D-mannosyl}-L-threonyl-[protein] + UDP + H(+). Its pathway is protein modification; protein glycosylation. Its function is as follows. Glycosyltransferase that acts on alpha-linked mannose of N-glycans and O-mannosyl glycans. Catalyzes the transfer of N-acetylglucosamine (GlcNAc) to the beta 1-6 linkage of the mannose residue of GlcNAc-beta1,2-Man-alpha on both the alpha1,3- and alpha1,6-linked mannose arms in the core structure of N-glycan. Also acts on the GlcNAc-beta1,2-Man-alpha1-Ser/Thr moiety, forming a 2,6-branched structure in brain O-mannosyl glycan. Plays an active role in modulating integrin and laminin-dependent adhesion and migration of neuronal cells via its activity in the O-mannosyl glycan pathway. The chain is Alpha-1,6-mannosylglycoprotein 6-beta-N-acetylglucosaminyltransferase B (MGAT5B) from Homo sapiens (Human).